We begin with the raw amino-acid sequence, 366 residues long: Ubiquitin carboxyl-terminal hydrolase 46 (366 aa).

One can recognise a USP domain in the interval 35 to 365 (FGLVNFGNTC…SGYILFYQSR (331 aa)). The Nucleophile role is filled by cysteine 44. Residues cysteine 182, cysteine 185, cysteine 229, and cysteine 232 each contribute to the Zn(2+) site. The active-site Proton acceptor is histidine 313.

Belongs to the peptidase C19 family. USP12/USP46 subfamily. As to quaternary structure, interacts with WDR48. Interacts with WDR20. Interacts with DMWD. Component of the USP46/WDR20/WDR48 deubiquitinating complex. In terms of tissue distribution, detected in lung and spleen, and at lower levels in brain, kidney, testis and liver.

The protein resides in the cytoplasm. The catalysed reaction is Thiol-dependent hydrolysis of ester, thioester, amide, peptide and isopeptide bonds formed by the C-terminal Gly of ubiquitin (a 76-residue protein attached to proteins as an intracellular targeting signal).. Its function is as follows. Deubiquitinating enzyme that plays a role in behavior, possibly by regulating GABA action. May act by mediating the deubiquitination of GAD1/GAD67. Has almost no deubiquitinating activity by itself and requires the interaction with WDR48 to have a high activity. Not involved in deubiquitination of monoubiquitinated FANCD2. This is Ubiquitin carboxyl-terminal hydrolase 46 from Rattus norvegicus (Rat).